Reading from the N-terminus, the 311-residue chain is UDP-N-acetylenolpyruvoylglucosamine reductase (311 aa).

Positions 28–197 constitute an FAD-binding PCMH-type domain; the sequence is KIGGNARWLV…VSARFHLARG (170 aa). Residue R177 is part of the active site. The active-site Proton donor is S226. E296 is a catalytic residue.

Belongs to the MurB family. The cofactor is FAD.

Its subcellular location is the cytoplasm. The enzyme catalyses UDP-N-acetyl-alpha-D-muramate + NADP(+) = UDP-N-acetyl-3-O-(1-carboxyvinyl)-alpha-D-glucosamine + NADPH + H(+). The protein operates within cell wall biogenesis; peptidoglycan biosynthesis. In terms of biological role, cell wall formation. The chain is UDP-N-acetylenolpyruvoylglucosamine reductase from Magnetococcus marinus (strain ATCC BAA-1437 / JCM 17883 / MC-1).